A 55-amino-acid chain; its full sequence is Potassium channel toxin alpha-KTx 17.1 (55 aa).

The first 23 residues, 1-23, serve as a signal peptide directing secretion; that stretch reads MKFIIVLILISVLIATIVPVNEA. A Pyrrolidone carboxylic acid modification is found at Q24. Cystine bridges form between C27–C43, C33–C48, and C37–C50. The residue at position 53 (T53) is a Threonine amide.

It belongs to the short scorpion toxin superfamily. Potassium channel inhibitor family. Alpha-KTx 17 subfamily. As to expression, expressed by the venom gland.

The protein localises to the secreted. Its function is as follows. Blocker of potassium channels, which inhibits both the delayed rectifier and fast transient potassium current. The inhibition is reversible and voltage-independent. It causes a depolarizing shift of the steady-state activation curve of the currents, without changing their steady-state inactivation behavior. In Olivierus martensii (Manchurian scorpion), this protein is Potassium channel toxin alpha-KTx 17.1.